Reading from the N-terminus, the 95-residue chain is Small ribosomal subunit protein uS19 (95 aa).

Belongs to the universal ribosomal protein uS19 family.

Its function is as follows. Protein S19 forms a complex with S13 that binds strongly to the 16S ribosomal RNA. The protein is Small ribosomal subunit protein uS19 of Bdellovibrio bacteriovorus (strain ATCC 15356 / DSM 50701 / NCIMB 9529 / HD100).